We begin with the raw amino-acid sequence, 386 residues long: Putative prophage major tail sheath protein (386 aa).

Belongs to the myoviridae tail sheath protein family.

The protein localises to the secreted. The protein is Putative prophage major tail sheath protein of Pseudomonas aeruginosa (strain UCBPP-PA14).